The sequence spans 309 residues: Tagatose-6-phosphate kinase (309 aa).

The protein belongs to the carbohydrate kinase PfkB family. LacC subfamily.

The catalysed reaction is D-tagatofuranose 6-phosphate + ATP = D-tagatofuranose 1,6-bisphosphate + ADP + H(+). It functions in the pathway carbohydrate metabolism; D-tagatose 6-phosphate degradation; D-glyceraldehyde 3-phosphate and glycerone phosphate from D-tagatose 6-phosphate: step 1/2. This is Tagatose-6-phosphate kinase from Streptococcus pyogenes serotype M1.